We begin with the raw amino-acid sequence, 80 residues long: Consomatin Mrc1 (80 aa).

Positions 1–22 are cleaved as a signal peptide; that stretch reads MQTAYWVMVMMMVWITAPLSEG. Positions 23 to 57 are excised as a propeptide; it reads GKLNDVIRGLVPDDVTPQLILRSLISRRPSDSVVR. Cys63 and Cys68 are joined by a disulfide. D-tryptophan is present on Trp65. Residues Pro69, Pro70, Pro71, and Pro72 each carry the 4-hydroxyproline modification. A propeptide spanning residues 74-80 is cleaved from the precursor; it reads RRPNGKG.

The protein belongs to the conotoxin C superfamily. Consomatin family. In terms of tissue distribution, expressed by the venom duct.

The protein localises to the secreted. Functionally, moderately activates human somatostatin receptors (SSTR) with a preferential activation of SSTR1 and SSTR4. In vivo, does not cause behavioral changes in mice within a few minutes of intracranial injection, but causes a progressive loss of movement thereafter. Four to five hours after injection, mice recover, even with the highest dose tested. Shows antinociception and antihyperalgesia activities in two mouse models of acute pain, most probably by acting outside the central nervous system. This chain is Consomatin Mrc1, found in Conus mercator (Trader cone).